We begin with the raw amino-acid sequence, 817 residues long: Protein hunchback (817 aa).

Disordered stretches follow at residues 51–77 (PGTI…HSPL), 93–132 (HNGG…TSSA), and 187–252 (YSQQ…EDQD). Over residues 62–76 (QQHSSMMASQPQHSP) the composition is skewed to low complexity. Residues 103 to 119 (FSDNSGAMTPSPNTNVG) show a composition bias toward polar residues. Over residues 189–201 (QQQQQQQQRQLQQ) the composition is skewed to low complexity. 4 consecutive C2H2-type zinc fingers follow at residues 287–309 (HKCK…ARTH), 316–338 (LQCP…IRKH), 344–366 (FQCD…RKSH), and 372–396 (YRCA…KYEH). Disordered stretches follow at residues 456-477 (PLQQ…SSVA), 491-513 (QNLA…SSQQ), 564-619 (QLQQ…QQTP), and 666-758 (APTS…AGNS). The segment covering 564–576 (QLQQQQQNKQANE) has biased composition (low complexity). The span at 577–595 (NGEEDEEDNDEVDEDEEEF) shows a compositional bias: acidic residues. Positions 680 to 694 (MPPTTSSPIHPSQVN) are enriched in polar residues. The segment covering 721 to 758 (PTTANTSASSTASSSGNSSNSSSTSTSSNSNSSSAGNS) has biased composition (low complexity). 2 consecutive C2H2-type zinc fingers follow at residues 764–786 (YECK…MGYH) and 792–816 (FKCN…RNAH).

This sequence belongs to the hunchback C2H2-type zinc-finger protein family.

Its subcellular location is the nucleus. Its function is as follows. Gap class segmentation protein that controls development of head structures. The sequence is that of Protein hunchback (hb) from Musca domestica (House fly).